A 286-amino-acid polypeptide reads, in one-letter code: MAGAKEIKTKIASVKNTQKITSAMEMVAASKMRRAQERMAASRPYAESMRKVIGHVAQGSLEYKHPYLEVREAKRVGYIVVATDRGLCGGLNVNLFKKVIADVKSWKAQGAEFEFCPIGARSVQFFKNFGGQVSAHASGLGDAPKLADLIGTVGVMLEAYNEGKLDRLYVVFNKFVNTMTQTPVIEQLLPLPKSEDDETAHRWDYIYEPDPKALLDTLLVRYVESQVYQGVVENIASEQAARMVAMKSATDNAGELINDLQLVYNKARQAAITQELSEIVSGASAV.

This sequence belongs to the ATPase gamma chain family. As to quaternary structure, F-type ATPases have 2 components, CF(1) - the catalytic core - and CF(0) - the membrane proton channel. CF(1) has five subunits: alpha(3), beta(3), gamma(1), delta(1), epsilon(1). CF(0) has three main subunits: a, b and c.

It is found in the cell inner membrane. In terms of biological role, produces ATP from ADP in the presence of a proton gradient across the membrane. The gamma chain is believed to be important in regulating ATPase activity and the flow of protons through the CF(0) complex. The polypeptide is ATP synthase gamma chain (Shewanella baltica (strain OS223)).